Here is a 78-residue protein sequence, read N- to C-terminus: Alpha-neurotoxin homolog 1 (78 aa).

Positions 1–21 (MKTLLLTLVVVTIVCLDFGYT) are cleaved as a signal peptide. Cystine bridges form between Cys-24–Cys-42, Cys-37–Cys-57, Cys-59–Cys-70, and Cys-71–Cys-76.

It belongs to the three-finger toxin family. Short-chain subfamily. Orphan group XII sub-subfamily. As to expression, expressed by the venom gland.

The protein localises to the secreted. This Micrurus corallinus (Brazilian coral snake) protein is Alpha-neurotoxin homolog 1.